The following is a 461-amino-acid chain: Cyclin-A2-4 (461 aa).

Belongs to the cyclin family. Cyclin AB subfamily.

This chain is Cyclin-A2-4 (CYCA2-4), found in Arabidopsis thaliana (Mouse-ear cress).